The sequence spans 769 residues: Integrin beta-8 (769 aa).

The N-terminal stretch at 1 to 42 (MCGSALAFFTAAFVCLQNDRRGPASFLWAAWVFSLVLGLGQG) is a signal peptide. Residues 43–684 (EDNRCASSNA…ECFSSPSYLR (642 aa)) are Extracellular-facing. The region spanning 46–95 (RCASSNAASCARCLALGPECGWCVQEDFISGGSRSERCDIVSNLISKGCS) is the PSI domain. Disulfide bonds link Cys-47-Cys-65, Cys-55-Cys-469, Cys-58-Cys-83, Cys-68-Cys-94, Cys-211-Cys-218, Cys-266-Cys-307, Cys-407-Cys-419, Cys-439-Cys-467, Cys-471-Cys-491, Cys-471-Cys-494, Cys-481-Cys-494, Cys-499-Cys-528, Cys-511-Cys-526, Cys-520-Cys-531, Cys-533-Cys-546, Cys-553-Cys-567, Cys-561-Cys-572, Cys-574-Cys-583, Cys-585-Cys-609, Cys-593-Cys-607, Cys-601-Cys-612, Cys-614-Cys-624, Cys-627-Cys-630, Cys-634-Cys-661, and Cys-640-Cys-657. Residues 146 to 384 (PVDLYYLVDV…NLVVEAYQKL (239 aa)) enclose the VWFA domain. Positions 154 and 156 each coordinate Mg(2+). Ca(2+) is bound at residue Asp-193. N-linked (GlcNAc...) asparagine glycosylation occurs at Asn-233. The Ca(2+) site is built by Asn-249, Asp-251, Pro-253, and Glu-254. Glu-254 lines the Mg(2+) pocket. Asn-402 carries an N-linked (GlcNAc...) asparagine glycan. 4 N-linked (GlcNAc...) asparagine glycosylation sites follow: Asn-421, Asn-431, Asn-456, and Asn-466. I-EGF domains follow at residues 471-495 (CEDN…FQCD), 499-547 (CHFD…KYCE), 548-584 (KDDF…DRCQ), and 585-625 (CPSA…RFCE). Asn-648 is a glycosylation site (N-linked (GlcNAc...) asparagine). Residues 685–704 (IFFIIFIVTFLIGLLKVLII) form a helical membrane-spanning segment. Topologically, residues 705-769 (RQVILQWNSN…NAHETFRCNF (65 aa)) are cytoplasmic.

This sequence belongs to the integrin beta chain family. Heterodimer of an alpha and a beta subunit. Beta-8 (ITGB8) associates with alpha-V (ITGAV) to form ITGAV:ITGB8. ITGAV:ITGB8 interacts with TGFB1. In terms of tissue distribution, placenta, kidney, brain, ovary, uterus and in several transformed cells. Transiently expressed in 293 human embryonic kidney cells.

The protein resides in the cell membrane. Integrin alpha-V:beta-8 (ITGAV:ITGB8) is a receptor for fibronectin. It recognizes the sequence R-G-D in its ligands. Integrin alpha-V:beta-6 (ITGAV:ITGB6) mediates R-G-D-dependent release of transforming growth factor beta-1 (TGF-beta-1) from regulatory Latency-associated peptide (LAP), thereby playing a key role in TGF-beta-1 activation on the surface of activated regulatory T-cells (Tregs). Required during vasculogenesis. The protein is Integrin beta-8 of Homo sapiens (Human).